A 239-amino-acid chain; its full sequence is tRNA (guanine-N(1)-)-methyltransferase (239 aa).

S-adenosyl-L-methionine is bound by residues glycine 108 and 127 to 132 (LGDYVL).

This sequence belongs to the RNA methyltransferase TrmD family. In terms of assembly, homodimer.

The protein resides in the cytoplasm. The enzyme catalyses guanosine(37) in tRNA + S-adenosyl-L-methionine = N(1)-methylguanosine(37) in tRNA + S-adenosyl-L-homocysteine + H(+). In terms of biological role, specifically methylates guanosine-37 in various tRNAs. In Streptococcus pneumoniae (strain P1031), this protein is tRNA (guanine-N(1)-)-methyltransferase.